The chain runs to 58 residues: Putative transcript Y 13 protein (58 aa).

The helical transmembrane segment at 17 to 37 threads the bilayer; sequence LLGWDLNLSLFLGLCLMLLLA.

The protein resides in the membrane. The sequence is that of Putative transcript Y 13 protein (TTTY13) from Homo sapiens (Human).